The following is a 712-amino-acid chain: 3',5'-cyclic-AMP phosphodiesterase 4C (712 aa).

Disordered stretches follow at residues 1–31 and 45–64; these read MENL…APKH and RFYS…LSPR. The segment covering 17–31 has biased composition (basic residues); that stretch reads SRSRGRHSMTRAPKH. Positions 48-64 are enriched in basic and acidic residues; it reads SDPDKSAGCRERDLSPR. Phosphoserine is present on Ser-73. Residues 181 to 200 are disordered; that stretch reads AKQGPVGNPSSSNQLPPAED. A PDEase domain is found at 312–641; it reads VQTDQEEQLA…EWYQSKIPRS (330 aa). Residue His-388 is the Proton donor of the active site. His-388 lines the 3',5'-cyclic AMP pocket. Positions 388 and 392 each coordinate AMP. Residues His-392, His-428, Asp-429, and Asp-546 each contribute to the Zn(2+) site. AMP is bound by residues Asp-429, Asp-546, Gln-597, and Phe-600. Position 429 (Asp-429) interacts with Mg(2+). Asp-429 provides a ligand contact to Mn(2+). Gln-597 and Phe-600 together coordinate 3',5'-cyclic AMP. Disordered regions lie at residues 636–655 and 664–712; these read SKIP…GPDR and EAEE…NQRT. At Ser-641 the chain carries Phosphoserine. The segment covering 664 to 678 has biased composition (acidic residues); it reads EAEEEDEEEEEEGEE.

This sequence belongs to the cyclic nucleotide phosphodiesterase family. PDE4 subfamily. As to quaternary structure, part of a complex containing AKAP5, ADCY5, ADCY6 and PKD2. Zn(2+) serves as cofactor. The cofactor is Mg(2+). Mn(2+) is required as a cofactor. As to expression, expressed in various tissues but not in cells of the immune system.

The protein resides in the cell projection. It is found in the cilium. It catalyses the reaction 3',5'-cyclic AMP + H2O = AMP + H(+). The protein operates within purine metabolism; 3',5'-cyclic AMP degradation; AMP from 3',5'-cyclic AMP: step 1/1. Inhibited by rolipram. Functionally, hydrolyzes the second messenger cAMP, which is a key regulator of many important physiological processes. The polypeptide is 3',5'-cyclic-AMP phosphodiesterase 4C (Homo sapiens (Human)).